The following is a 347-amino-acid chain: S-adenosylmethionine decarboxylase proenzyme (347 aa).

Catalysis depends on residues Glu-10 and Glu-13. The Schiff-base intermediate with substrate; via pyruvic acid role is filled by Ser-66. Position 66 is a pyruvic acid (Ser); by autocatalysis (Ser-66). Cys-80 serves as the catalytic Proton donor; for catalytic activity. Residues Ser-237 and His-251 each act as proton acceptor; for processing activity in the active site.

Belongs to the eukaryotic AdoMetDC family. Requires pyruvate as cofactor. Post-translationally, is synthesized initially as an inactive proenzyme. Formation of the active enzyme involves a self-maturation process in which the active site pyruvoyl group is generated from an internal serine residue via an autocatalytic post-translational modification. Two non-identical subunits are generated from the proenzyme in this reaction, and the pyruvate is formed at the N-terminus of the alpha chain, which is derived from the carboxyl end of the proenzyme. The post-translation cleavage follows an unusual pathway, termed non-hydrolytic serinolysis, in which the side chain hydroxyl group of the serine supplies its oxygen atom to form the C-terminus of the beta chain, while the remainder of the serine residue undergoes an oxidative deamination to produce ammonia and the pyruvoyl group blocking the N-terminus of the alpha chain.

The catalysed reaction is S-adenosyl-L-methionine + H(+) = S-adenosyl 3-(methylsulfanyl)propylamine + CO2. Its pathway is amine and polyamine biosynthesis; S-adenosylmethioninamine biosynthesis; S-adenosylmethioninamine from S-adenosyl-L-methionine: step 1/1. This is S-adenosylmethionine decarboxylase proenzyme (SamDC) from Drosophila melanogaster (Fruit fly).